The chain runs to 120 residues: Immunoglobulin lambda variable 2-14 (120 aa).

Residues 1–19 (MAWALLLLTLLTQGTGSWA) form the signal peptide. Q20 is subject to Pyrrolidone carboxylic acid. Positions 20–44 (QSALTQPASVSGSPGQSITISCTGT) are framework-1. Residues 20–119 (QSALTQPASV…SSYTSSSTLH (100 aa)) enclose the Ig-like domain. C41 and C109 form a disulfide bridge. Residues 45–53 (SSDVGGYNY) are complementarity-determining-1. The interval 54–70 (VSWYQQHPGKAPKLMIY) is framework-2. The complementarity-determining-2 stretch occupies residues 71–73 (EVS). The interval 74-109 (NRPSGVSNRFSGSKSGNTASLTISGLQAEDEADYYC) is framework-3. The segment at 110 to 119 (SSYTSSSTLH) is complementarity-determining-3.

Immunoglobulins are composed of two identical heavy chains and two identical light chains; disulfide-linked.

It localises to the secreted. The protein resides in the cell membrane. In terms of biological role, v region of the variable domain of immunoglobulin light chains that participates in the antigen recognition. Immunoglobulins, also known as antibodies, are membrane-bound or secreted glycoproteins produced by B lymphocytes. In the recognition phase of humoral immunity, the membrane-bound immunoglobulins serve as receptors which, upon binding of a specific antigen, trigger the clonal expansion and differentiation of B lymphocytes into immunoglobulins-secreting plasma cells. Secreted immunoglobulins mediate the effector phase of humoral immunity, which results in the elimination of bound antigens. The antigen binding site is formed by the variable domain of one heavy chain, together with that of its associated light chain. Thus, each immunoglobulin has two antigen binding sites with remarkable affinity for a particular antigen. The variable domains are assembled by a process called V-(D)-J rearrangement and can then be subjected to somatic hypermutations which, after exposure to antigen and selection, allow affinity maturation for a particular antigen. This chain is Immunoglobulin lambda variable 2-14, found in Homo sapiens (Human).